Consider the following 94-residue polypeptide: Small ribosomal subunit protein uS19 (94 aa).

It belongs to the universal ribosomal protein uS19 family.

Protein S19 forms a complex with S13 that binds strongly to the 16S ribosomal RNA. The protein is Small ribosomal subunit protein uS19 of Elusimicrobium minutum (strain Pei191).